We begin with the raw amino-acid sequence, 161 residues long: 3-isopropylmalate dehydratase small subunit (161 aa).

The protein belongs to the LeuD family. LeuD type 2 subfamily. As to quaternary structure, heterodimer of LeuC and LeuD.

The catalysed reaction is (2R,3S)-3-isopropylmalate = (2S)-2-isopropylmalate. It participates in amino-acid biosynthesis; L-leucine biosynthesis; L-leucine from 3-methyl-2-oxobutanoate: step 2/4. Catalyzes the isomerization between 2-isopropylmalate and 3-isopropylmalate, via the formation of 2-isopropylmaleate. This is 3-isopropylmalate dehydratase small subunit from Pyrobaculum islandicum (strain DSM 4184 / JCM 9189 / GEO3).